A 253-amino-acid polypeptide reads, in one-letter code: Indole-3-glycerol phosphate synthase (253 aa).

The protein belongs to the TrpC family.

The enzyme catalyses 1-(2-carboxyphenylamino)-1-deoxy-D-ribulose 5-phosphate + H(+) = (1S,2R)-1-C-(indol-3-yl)glycerol 3-phosphate + CO2 + H2O. Its pathway is amino-acid biosynthesis; L-tryptophan biosynthesis; L-tryptophan from chorismate: step 4/5. This is Indole-3-glycerol phosphate synthase from Bacillus mycoides (strain KBAB4) (Bacillus weihenstephanensis).